A 328-amino-acid chain; its full sequence is Diaminopimelate epimerase (328 aa).

2 residues coordinate substrate: N14 and N73. C82 acts as the Proton donor in catalysis. Substrate contacts are provided by residues 83–84 (GN), N170, N206, and 224–225 (ER). C233 functions as the Proton acceptor in the catalytic mechanism. Position 234 to 235 (234 to 235 (GT)) interacts with substrate.

It belongs to the diaminopimelate epimerase family. As to quaternary structure, homodimer.

Its subcellular location is the cytoplasm. The catalysed reaction is (2S,6S)-2,6-diaminopimelate = meso-2,6-diaminopimelate. It functions in the pathway amino-acid biosynthesis; L-lysine biosynthesis via DAP pathway; DL-2,6-diaminopimelate from LL-2,6-diaminopimelate: step 1/1. Catalyzes the stereoinversion of LL-2,6-diaminopimelate (L,L-DAP) to meso-diaminopimelate (meso-DAP), a precursor of L-lysine and an essential component of the bacterial peptidoglycan. In Listeria welshimeri serovar 6b (strain ATCC 35897 / DSM 20650 / CCUG 15529 / CIP 8149 / NCTC 11857 / SLCC 5334 / V8), this protein is Diaminopimelate epimerase.